Here is a 299-residue protein sequence, read N- to C-terminus: ATP phosphoribosyltransferase (299 aa).

It belongs to the ATP phosphoribosyltransferase family. Long subfamily. It depends on Mg(2+) as a cofactor.

It is found in the cytoplasm. It carries out the reaction 1-(5-phospho-beta-D-ribosyl)-ATP + diphosphate = 5-phospho-alpha-D-ribose 1-diphosphate + ATP. It functions in the pathway amino-acid biosynthesis; L-histidine biosynthesis; L-histidine from 5-phospho-alpha-D-ribose 1-diphosphate: step 1/9. Feedback inhibited by histidine. Its function is as follows. Catalyzes the condensation of ATP and 5-phosphoribose 1-diphosphate to form N'-(5'-phosphoribosyl)-ATP (PR-ATP). Has a crucial role in the pathway because the rate of histidine biosynthesis seems to be controlled primarily by regulation of HisG enzymatic activity. In Shewanella loihica (strain ATCC BAA-1088 / PV-4), this protein is ATP phosphoribosyltransferase.